The chain runs to 127 residues: EF-hand calcium-binding domain-containing protein 10 (127 aa).

Positions 63–98 (MDNSNIVAMFEMMDSSGRGTISFVQYKEALKTLGLC) constitute an EF-hand domain.

This is EF-hand calcium-binding domain-containing protein 10 (EFCAB10) from Homo sapiens (Human).